The following is a 463-amino-acid chain: Retinoic acid receptor RXR-gamma (463 aa).

The interval 1 to 138 (MYGNYSHFMK…TSPGSLVKHI (138 aa)) is modulating. The segment at 17-53 (GSPGHSGSTSMSPSAALSTGKPMDSHPSYTDTPVSAP) is disordered. The span at 21 to 33 (HSGSTSMSPSAAL) shows a compositional bias: polar residues. 2 consecutive NR C4-type zinc fingers follow at residues 139–159 (CAIC…CEGC) and 175–199 (CRDN…YQKC). Positions 139–204 (CAICGDRSSG…RYQKCLVMGM (66 aa)) form a DNA-binding region, nuclear receptor. The segment at 205–230 (KREAVQEERQRSRERAESEAECASSG) is hinge. The span at 211–222 (EERQRSRERAES) shows a compositional bias: basic and acidic residues. Positions 211–232 (EERQRSRERAESEAECASSGHE) are disordered. In terms of domain architecture, NR LBD spans 231–459 (HEDMPVERIL…TFLMEMLETP (229 aa)).

This sequence belongs to the nuclear hormone receptor family. NR2 subfamily. Homodimer. Heterodimer with a RAR molecule. Binds DNA preferentially as a RAR/RXR heterodimer. Interacts with RARA. Acetylated by EP300.

The protein localises to the nucleus. Its subcellular location is the cytoplasm. Receptor for retinoic acid. Retinoic acid receptors bind as heterodimers to their target response elements in response to their ligands, all-trans or 9-cis retinoic acid, and regulate gene expression in various biological processes. The RAR/RXR heterodimers bind to the retinoic acid response elements (RARE) composed of tandem 5'-AGGTCA-3' sites known as DR1-DR5. The high affinity ligand for RXRs is 9-cis retinoic acid. This chain is Retinoic acid receptor RXR-gamma (RXRG), found in Sus scrofa (Pig).